The sequence spans 153 residues: uncharacterized protein (153 aa).

Positions 1-25 (MKKRQYLKSLYVALLGTLCYLSVNA) are cleaved as a signal peptide.

This is an uncharacterized protein from Pasteurella multocida (strain Pm70).